The chain runs to 109 residues: T cell receptor alpha variable 26-1 (109 aa).

The first 19 residues, 1–19 (MRLVARVTVFLTFGTIIDA), serve as a signal peptide directing secretion. Residues 20–109 (KTTQPTSMDC…TAVYYCIVRV (90 aa)) enclose the Ig-like domain. Cys-39 and Cys-105 are oxidised to a cystine. N-linked (GlcNAc...) asparagine glycosylation is found at Asn-40 and Asn-71.

In terms of assembly, alpha-beta TR is a heterodimer composed of an alpha and beta chain; disulfide-linked. The alpha-beta TR is associated with the transmembrane signaling CD3 coreceptor proteins to form the TR-CD3 (TcR or TCR). The assembly of alpha-beta TR heterodimers with CD3 occurs in the endoplasmic reticulum where a single alpha-beta TR heterodimer associates with one CD3D-CD3E heterodimer, one CD3G-CD3E heterodimer and one CD247 homodimer forming a stable octameric structure. CD3D-CD3E and CD3G-CD3E heterodimers preferentially associate with TR alpha and TR beta chains, respectively. The association of the CD247 homodimer is the last step of TcR assembly in the endoplasmic reticulum and is required for transport to the cell surface.

The protein resides in the cell membrane. V region of the variable domain of T cell receptor (TR) alpha chain that participates in the antigen recognition. Alpha-beta T cell receptors are antigen specific receptors which are essential to the immune response and are present on the cell surface of T lymphocytes. Recognize peptide-major histocompatibility (MH) (pMH) complexes that are displayed by antigen presenting cells (APC), a prerequisite for efficient T cell adaptive immunity against pathogens. Binding of alpha-beta TR to pMH complex initiates TR-CD3 clustering on the cell surface and intracellular activation of LCK that phosphorylates the ITAM motifs of CD3G, CD3D, CD3E and CD247 enabling the recruitment of ZAP70. In turn ZAP70 phosphorylates LAT, which recruits numerous signaling molecules to form the LAT signalosome. The LAT signalosome propagates signal branching to three major signaling pathways, the calcium, the mitogen-activated protein kinase (MAPK) kinase and the nuclear factor NF-kappa-B (NF-kB) pathways, leading to the mobilization of transcription factors that are critical for gene expression and essential for T cell growth and differentiation. The T cell repertoire is generated in the thymus, by V-(D)-J rearrangement. This repertoire is then shaped by intrathymic selection events to generate a peripheral T cell pool of self-MH restricted, non-autoaggressive T cells. Post-thymic interaction of alpha-beta TR with the pMH complexes shapes TR structural and functional avidity. This is T cell receptor alpha variable 26-1 from Homo sapiens (Human).